The chain runs to 519 residues: Glucose-1-phosphate adenylyltransferase large subunit 2, chloroplastic/amyloplastic (519 aa).

It belongs to the bacterial/plant glucose-1-phosphate adenylyltransferase family. In terms of assembly, heterotetramer. In terms of tissue distribution, leaves and tubers.

The protein resides in the plastid. Its subcellular location is the chloroplast. The protein localises to the amyloplast. It carries out the reaction alpha-D-glucose 1-phosphate + ATP + H(+) = ADP-alpha-D-glucose + diphosphate. Its pathway is glycan biosynthesis; starch biosynthesis. Activated by 3'phosphoglycerate, inhibited by orthophosphate. Allosteric regulation. This protein plays a role in synthesis of starch. It catalyzes the synthesis of the activated glycosyl donor, ADP-glucose from Glc-1-P and ATP. This Solanum tuberosum (Potato) protein is Glucose-1-phosphate adenylyltransferase large subunit 2, chloroplastic/amyloplastic (AGPS2).